The sequence spans 727 residues: Transcription activator of gluconeogenesis TRV_01442 (727 aa).

Positions 1 to 32 (MSPHQTTGQESDNMTVNGENAQASSQYIQSNE) are enriched in polar residues. The disordered stretch occupies residues 1–62 (MSPHQTTGQE…PSRPKRKKAK (62 aa)). The span at 39-55 (ATEKKASAAKAAKDPSR) shows a compositional bias: basic and acidic residues. The zn(2)-C6 fungal-type DNA-binding region spans 65-93 (CYACQRGHLTCGDERPCQRCIKRGFQDAC). Composition is skewed to polar residues over residues 129-213 (NNVN…TPSA), 267-277 (PSDSGAQRGSI), and 361-379 (MMTTSSATFEDTTNSGAFN). 5 disordered regions span residues 129-224 (NNVN…FNST), 264-297 (DTPPSDSGAQRGSIGQNGSGTFGLTGSSFSESPS), 353-399 (SPAS…STPQ), 533-567 (NHNVNTGGSSGLMTGSTSRGSYTPRPYSSEVYNSS), and 627-666 (GSNGEADAGLNGEATSNETNELNGSHTNGATTNGRGQRRW). Low complexity-rich tracts occupy residues 380-399 (SRQNVPVSQQRQQPVVSTPQ) and 543-553 (GLMTGSTSRGS). The segment covering 639–661 (EATSNETNELNGSHTNGATTNGR) has biased composition (polar residues).

The protein belongs to the ERT1/acuK family.

Its subcellular location is the nucleus. Its function is as follows. Transcription factor which regulates nonfermentable carbon utilization. Activator of gluconeogenetic genes. The polypeptide is Transcription activator of gluconeogenesis TRV_01442 (Trichophyton verrucosum (strain HKI 0517)).